The primary structure comprises 154 residues: Egg-lysin (154 aa).

A signal peptide spans 1 to 18; the sequence is MKLFVLCIFAMMATLAMS.

In terms of assembly, homodimer. In terms of tissue distribution, sperm.

Functionally, dissolves the egg vitelline layer nonenzymatically during fertilization. It creates a hole of about 3 mu-m in diameter through which the sperm pass. The sequence is that of Egg-lysin from Haliotis kamtschatkana (Pinto abalone).